Reading from the N-terminus, the 265-residue chain is Phosphonates import ATP-binding protein PhnC 1 (265 aa).

Residues 3–247 (LRLSAIELRH…HLDTLYANEQ (245 aa)) form the ABC transporter domain. An ATP-binding site is contributed by 36 to 43 (GPSGAGKT).

The protein belongs to the ABC transporter superfamily. Phosphonates importer (TC 3.A.1.9.1) family. In terms of assembly, the complex is composed of two ATP-binding proteins (PhnC), two transmembrane proteins (PhnE) and a solute-binding protein (PhnD).

It is found in the cell inner membrane. The catalysed reaction is phosphonate(out) + ATP + H2O = phosphonate(in) + ADP + phosphate + H(+). Part of the ABC transporter complex PhnCDE involved in phosphonates import. Responsible for energy coupling to the transport system. The protein is Phosphonates import ATP-binding protein PhnC 1 of Pseudomonas syringae pv. syringae (strain B728a).